The following is a 137-amino-acid chain: Peptide methionine sulfoxide reductase MsrB (137 aa).

The MsrB domain maps to 9–131 (DAEWRAMLDD…NSASLRFDAT (123 aa)). Zn(2+) is bound by residues Cys-48, Cys-51, Cys-97, and Cys-100. The Nucleophile role is filled by Cys-120.

Belongs to the MsrB Met sulfoxide reductase family. It depends on Zn(2+) as a cofactor.

The catalysed reaction is L-methionyl-[protein] + [thioredoxin]-disulfide + H2O = L-methionyl-(R)-S-oxide-[protein] + [thioredoxin]-dithiol. This is Peptide methionine sulfoxide reductase MsrB from Herminiimonas arsenicoxydans.